We begin with the raw amino-acid sequence, 575 residues long: V-type ATP synthase alpha chain (575 aa).

An ATP-binding site is contributed by 238-245; it reads GPFGAGKT.

The protein belongs to the ATPase alpha/beta chains family.

The enzyme catalyses ATP + H2O + 4 H(+)(in) = ADP + phosphate + 5 H(+)(out). Functionally, produces ATP from ADP in the presence of a proton gradient across the membrane. The V-type alpha chain is a catalytic subunit. The polypeptide is V-type ATP synthase alpha chain (Borreliella burgdorferi (strain ZS7) (Borrelia burgdorferi)).